We begin with the raw amino-acid sequence, 320 residues long: Short-chain dehydrogenase/reductase ATR7 (320 aa).

NADP(+)-binding residues include Ser32, Ile34, Gln55, Asp70, Asn93, Lys134, Tyr167, Lys171, and Thr202. Tyr167 functions as the Proton acceptor in the catalytic mechanism. The active-site Lowers pKa of active site Tyr is the Lys171.

It belongs to the short-chain dehydrogenases/reductases (SDR) family.

It functions in the pathway mycotoxin biosynthesis. Short-chain dehydrogenase/reductase; part of the core atranone cluster (CAC) which products are predicted to catalyze most or all steps of mycotoxin atranone synthesis, starting from geranylgeranyl pyrophosphate (GGPP). The initial cyclization of GGPP to dolabellane is probably performed by the terpene cyclase ATR13. The Baeyer-Villiger oxidation near the end of the atranone synthesis, which converts atranones D and E to atranones F and G is predicted to be catalyzed by the monooxygenase ATR8. Of the CAC's other predicted gene products, the reducing PKS ATR6 might synthesize a polyketide chain. This polyketide is probably transferred onto the atranone backbone by the polyketide transferase ATR5. Other predicted CAC products include 4 oxygenases (ATR2, ATR3, ATR4, and ATR14), 3 short-chain reductases (ATR7, ATR9, and ATR10), and a methyltransferase (ATR12). These may all be involved in the various steps of atranone biosynthesis, although their specific roles must await experimental determination. In Stachybotrys chlorohalonatus (strain IBT 40285), this protein is Short-chain dehydrogenase/reductase ATR7.